A 220-amino-acid chain; its full sequence is CRIB domain-containing protein RIC3 (220 aa).

Residues 28-41 (IGFPTDVKHVAHIG) form the CRIB domain. Positions 39-220 (HIGSDGPATN…CNDNNISDKE (182 aa)) are disordered. The segment covering 61–77 (NENGQVVSRADANNNQI) has biased composition (polar residues). The segment covering 108-121 (NGSPPRRNSSASAS) has biased composition (low complexity). 2 stretches are compositionally biased toward basic residues: residues 127-136 (NTRRHHRSRH) and 172-184 (HSRKSTSRHRKPK). Residues 209-220 (DTCNDNNISDKE) show a composition bias toward polar residues.

Interacts with ARAC11/ROP1. In terms of tissue distribution, expressed in flowers and pollen.

It is found in the cytoplasm. Functions as a downstream effector of Rho-related GTP binding proteins of the 'Rho of Plants' (ROPs) family. Participates in the propagation of ROP GTPase signals in specific cellular responses. Functions as a downstream effector of ARAC11/ROP1 to activate calcium signaling that leads to F-actin disassembly associated with exocytosis in the tip of the growing pollen tube. Counteracts the ARAC11/ROP1-RIC4 pathway, which promotes apical F-actin assembly associated with vesicle accumulation, to control actin dynamics and pollen tube apical growth. The protein is CRIB domain-containing protein RIC3 (RIC3) of Arabidopsis thaliana (Mouse-ear cress).